A 246-amino-acid polypeptide reads, in one-letter code: Proteasome subunit alpha type-6-B (246 aa).

Belongs to the peptidase T1A family. In terms of assembly, component of the 20S core complex of the 26S proteasome. The 26S proteasome is composed of a core protease (CP), known as the 20S proteasome, capped at one or both ends by the 19S regulatory particle (RP/PA700). The 20S proteasome core is composed of 28 subunits that are arranged in four stacked rings, resulting in a barrel-shaped structure. The two end rings are each formed by seven alpha subunits, and the two central rings are each formed by seven beta subunits. The catalytic chamber with the active sites is on the inside of the barrel.

The protein localises to the cytoplasm. It localises to the nucleus. The proteasome is a multicatalytic proteinase complex which is characterized by its ability to cleave peptides with Arg, Phe, Tyr, Leu, and Glu adjacent to the leaving group at neutral or slightly basic pH. The proteasome has an ATP-dependent proteolytic activity. In Arabidopsis thaliana (Mouse-ear cress), this protein is Proteasome subunit alpha type-6-B (PAA2).